A 336-amino-acid polypeptide reads, in one-letter code: IgLON family member 5 (336 aa).

A signal peptide spans 1–30; it reads MPPPAPGARLRLLAAAALAGLAVISRGLLS. 3 consecutive Ig-like C2-type domains span residues 33-122, 132-213, and 218-307; these read LEFS…QPYT, PARI…VLVT, and PTIT…MRLL. N-linked (GlcNAc...) asparagine glycosylation is found at asparagine 41, asparagine 49, asparagine 67, and asparagine 137. A disulfide bridge connects residues cysteine 54 and cysteine 112. 2 disulfide bridges follow: cysteine 154/cysteine 195 and cysteine 238/cysteine 291. Asparagine 288 is a glycosylation site (N-linked (GlcNAc...) asparagine).

This sequence belongs to the immunoglobulin superfamily. IgLON family.

It is found in the secreted. The chain is IgLON family member 5 (Iglon5) from Mus musculus (Mouse).